A 176-amino-acid chain; its full sequence is Peptide methionine sulfoxide reductase MsrA (176 aa).

Residue Cys-10 is part of the active site.

The protein belongs to the MsrA Met sulfoxide reductase family.

The catalysed reaction is L-methionyl-[protein] + [thioredoxin]-disulfide + H2O = L-methionyl-(S)-S-oxide-[protein] + [thioredoxin]-dithiol. It catalyses the reaction [thioredoxin]-disulfide + L-methionine + H2O = L-methionine (S)-S-oxide + [thioredoxin]-dithiol. Functionally, has an important function as a repair enzyme for proteins that have been inactivated by oxidation. Catalyzes the reversible oxidation-reduction of methionine sulfoxide in proteins to methionine. This chain is Peptide methionine sulfoxide reductase MsrA, found in Sulfolobus acidocaldarius (strain ATCC 33909 / DSM 639 / JCM 8929 / NBRC 15157 / NCIMB 11770).